The primary structure comprises 154 residues: MYKMQLLSCIALTLALVANGAPTSSSTENTKKQVQSLLQDLHLLLKEINNHENLKLFRMLAFKFYMPKKATELKHLQCLAEELKPLEDVLNVAQSKTQNSIDIKDLMDNINRIVLTLKGSETRFTCEYDDETVTAVEFLNKWITFCQSIYSTMT.

An N-terminal signal peptide occupies residues 1–20 (MYKMQLLSCIALTLALVANG). Threonine 23 is a glycosylation site (O-linked (GalNAc...) threonine). The cysteines at positions 78 and 126 are disulfide-linked.

It belongs to the IL-2 family.

The protein localises to the secreted. Cytokine produced by activated CD4-positive helper T-cells and to a lesser extend activated CD8-positive T-cells and natural killer (NK) cells that plays pivotal roles in the immune response and tolerance. Binds to a receptor complex composed of either the high-affinity trimeric IL-2R (IL2RA/CD25, IL2RB/CD122 and IL2RG/CD132) or the low-affinity dimeric IL-2R (IL2RB and IL2RG). Interaction with the receptor leads to oligomerization and conformation changes in the IL-2R subunits resulting in downstream signaling starting with phosphorylation of JAK1 and JAK3. In turn, JAK1 and JAK3 phosphorylate the receptor to form a docking site leading to the phosphorylation of several substrates including STAT5. This process leads to activation of several pathways including STAT, phosphoinositide-3-kinase/PI3K and mitogen-activated protein kinase/MAPK pathways. Functions as a T-cell growth factor and can increase NK-cell cytolytic activity as well. Promotes strong proliferation of activated B-cells and subsequently immunoglobulin production. Plays a pivotal role in regulating the adaptive immune system by controlling the survival and proliferation of regulatory T-cells, which are required for the maintenance of immune tolerance. Moreover, participates in the differentiation and homeostasis of effector T-cell subsets, including Th1, Th2, Th17 as well as memory CD8-positive T-cells. The protein is Interleukin-2 (IL2) of Delphinapterus leucas (Beluga whale).